The chain runs to 126 residues: Large ribosomal subunit protein bL12 (126 aa).

It belongs to the bacterial ribosomal protein bL12 family. As to quaternary structure, homodimer. Part of the ribosomal stalk of the 50S ribosomal subunit. Forms a multimeric L10(L12)X complex, where L10 forms an elongated spine to which 2 to 4 L12 dimers bind in a sequential fashion. Binds GTP-bound translation factors.

Functionally, forms part of the ribosomal stalk which helps the ribosome interact with GTP-bound translation factors. Is thus essential for accurate translation. This is Large ribosomal subunit protein bL12 from Desulforudis audaxviator (strain MP104C).